The primary structure comprises 175 residues: Gamma-crystallin B (175 aa).

Beta/gamma crystallin 'Greek key' domains lie at 2-40 (GKIT…RVDS) and 41-83 (GCWM…RLIP). The tract at residues 84–88 (QHSGT) is connecting peptide. Beta/gamma crystallin 'Greek key' domains lie at 89–129 (FRMR…NVLD) and 130–172 (GCWV…RRVM).

The protein belongs to the beta/gamma-crystallin family. In terms of assembly, monomer.

In terms of biological role, crystallins are the dominant structural components of the vertebrate eye lens. This is Gamma-crystallin B (CRYGB) from Canis lupus familiaris (Dog).